Here is a 340-residue protein sequence, read N- to C-terminus: Uroporphyrinogen decarboxylase (340 aa).

Residues 21–25, Asp-71, Tyr-148, Ser-203, and His-316 each bind substrate; that span reads RQAGR.

It belongs to the uroporphyrinogen decarboxylase family. As to quaternary structure, homodimer.

The protein resides in the cytoplasm. It catalyses the reaction uroporphyrinogen III + 4 H(+) = coproporphyrinogen III + 4 CO2. It participates in porphyrin-containing compound metabolism; protoporphyrin-IX biosynthesis; coproporphyrinogen-III from 5-aminolevulinate: step 4/4. In terms of biological role, catalyzes the decarboxylation of four acetate groups of uroporphyrinogen-III to yield coproporphyrinogen-III. The chain is Uroporphyrinogen decarboxylase from Campylobacter jejuni (strain RM1221).